Here is a 396-residue protein sequence, read N- to C-terminus: MAVQESAAQLSMALKVQEYPTLKVPYETLNKRFRAAQKNIDRETSHVTMVVAELEKTLSSCSAVDSVVSLLDGVVEKLSVLKRKAMESIQAEDESAKLCKRRIEHLKEHSSDQTAAINMWKKKRMDRMMVEHLLRCGYYNTAVKLARQSEIEDLVNIEMFLTAKEVEESLERQETMTCLAWCHDNKSRLRKMKSCLEFSLRIQEFIELIRQNKRLDAVRHARKHFSQAEGSQLDEVRQVMGMLAFPSDTHISPYKDLLDPARWRMLIQQFRYDNYRLHQLGNNSVFTITLQAGLSAIKTPQCYKEDGTSKNPDCPVCSKSLNKLAQPLPLAHCANSRLVCKISGDVMNENNPPMMLPNGYVYGYNSLLSIRQDDKVVCPRTKEVFNFSQAEKVYIM.

One can recognise a LisH domain in the interval Lys121–Asp153. Residues Met159 to Asp216 form the CTLH domain. Residues Cys314–Thr381 form an RING-Gid-type zinc finger.

In terms of assembly, identified in the CTLH complex that contains at least MAEA, RMND5A, GID8, WDR26, and RANBP9 and/or RANBP10 as the catalytic core. Interacts with F-actin.

It localises to the nucleus matrix. Its subcellular location is the cell membrane. The protein localises to the cytoplasm. The protein resides in the cytoskeleton. The catalysed reaction is S-ubiquitinyl-[E2 ubiquitin-conjugating enzyme]-L-cysteine + [acceptor protein]-L-lysine = [E2 ubiquitin-conjugating enzyme]-L-cysteine + N(6)-ubiquitinyl-[acceptor protein]-L-lysine.. Its function is as follows. Core component of the CTLH E3 ubiquitin-protein ligase complex that selectively accepts ubiquitin from UBE2H and mediates ubiquitination and subsequent proteasomal degradation of the transcription factor HBP1. MAEA and RMND5A are both required for catalytic activity of the CTLH E3 ubiquitin-protein ligase complex. MAEA is required for normal cell proliferation. The CTLH E3 ubiquitin-protein ligase complex is not required for the degradation of enzymes involved in gluconeogenesis, such as FBP1. Plays a role in erythroblast maturation and in the development of mature macrophages. Mediates the attachment of erythroid cell to mature macrophages; this MAEA-mediated contact inhibits erythroid cell apoptosis. Participates in erythroblastic island formation, which is the functional unit of definitive erythropoiesis. Associates with F-actin to regulate actin distribution in erythroblasts and macrophages. May contribute to nuclear architecture and cells division events. The sequence is that of E3 ubiquitin-protein transferase MAEA (maea) from Xenopus laevis (African clawed frog).